Here is a 161-residue protein sequence, read N- to C-terminus: Protein yippee-like B0546.4 (161 aa).

The region spanning 14–111 (SLYGCVVCNT…IENANFEKIA (98 aa)) is the Yippee domain. Positions 18, 21, 74, and 77 each coordinate Zn(2+). Residues 117–161 (PLGEDRQEAPPAPNLEMSRYPLEAEKKSRPQYRTVSVSSSSSAEC) form a disordered region. Residues 151–161 (VSVSSSSSAEC) are compositionally biased toward low complexity.

The protein belongs to the yippee family.

The polypeptide is Protein yippee-like B0546.4 (Caenorhabditis elegans).